The chain runs to 109 residues: Period circadian protein (109 aa).

Residues 59 to 109 are disordered; that stretch reads CFEGSGGSGSSGNFTSGSNLNMRSVTNTSNTGTGTSSESVPLVTLTEALIS. Positions 69–98 are enriched in low complexity; that stretch reads SGNFTSGSNLNMRSVTNTSNTGTGTSSESV.

As to quaternary structure, forms a heterodimer with timeless (TIM); the complex then translocates into the nucleus. In terms of processing, phosphorylated with a circadian rhythmicity, probably by the double-time protein (dbt). Phosphorylation could be implicated in the stability of per monomer and in the formation of heterodimer per-tim.

Its subcellular location is the nucleus. The protein resides in the cytoplasm. It localises to the perinuclear region. Functionally, essential for biological clock functions. Determines the period length of circadian and ultradian rhythms; an increase in PER dosage leads to shortened circadian rhythms and a decrease leads to lengthened circadian rhythms. Essential for the circadian rhythmicity of locomotor activity, eclosion behavior, and for the rhythmic component of the male courtship song that originates in the thoracic nervous system. The biological cycle depends on the rhythmic formation and nuclear localization of the TIM-PER complex. Light induces the degradation of TIM, which promotes elimination of PER. Nuclear activity of the heterodimer coordinatively regulates PER and TIM transcription through a negative feedback loop. Behaves as a negative element in circadian transcriptional loop. Does not appear to bind DNA, suggesting indirect transcriptional inhibition. The chain is Period circadian protein (per) from Syritta pipiens (Hoverfly).